Reading from the N-terminus, the 310-residue chain is Beta-ketoacyl-[acyl-carrier-protein] synthase III 1 (310 aa).

Catalysis depends on residues Cys112 and His235. An ACP-binding region spans residues 236–240 (QANIR). Asn265 is an active-site residue.

It belongs to the thiolase-like superfamily. FabH family. Homodimer.

Its subcellular location is the cytoplasm. The enzyme catalyses malonyl-[ACP] + acetyl-CoA + H(+) = 3-oxobutanoyl-[ACP] + CO2 + CoA. Its pathway is lipid metabolism; fatty acid biosynthesis. Functionally, catalyzes the condensation reaction of fatty acid synthesis by the addition to an acyl acceptor of two carbons from malonyl-ACP. Catalyzes the first condensation reaction which initiates fatty acid synthesis and may therefore play a role in governing the total rate of fatty acid production. Possesses both acetoacetyl-ACP synthase and acetyl transacylase activities. Its substrate specificity determines the biosynthesis of branched-chain and/or straight-chain of fatty acids. This chain is Beta-ketoacyl-[acyl-carrier-protein] synthase III 1, found in Bacillus anthracis.